We begin with the raw amino-acid sequence, 324 residues long: Acetyl-coenzyme A carboxylase carboxyl transferase subunit alpha (324 aa).

The region spanning 44–298 (RFQNQLVKLQ…KKELTEQLDS (255 aa)) is the CoA carboxyltransferase C-terminal domain.

The protein belongs to the AccA family. As to quaternary structure, acetyl-CoA carboxylase is a heterohexamer composed of biotin carboxyl carrier protein (accB), biotin carboxylase (accC) and two subunits each of ACCase subunit alpha (accA) and ACCase subunit beta (accD).

The protein resides in the plastid. It is found in the chloroplast. It catalyses the reaction N(6)-carboxybiotinyl-L-lysyl-[protein] + acetyl-CoA = N(6)-biotinyl-L-lysyl-[protein] + malonyl-CoA. It functions in the pathway lipid metabolism; malonyl-CoA biosynthesis; malonyl-CoA from acetyl-CoA: step 1/1. Functionally, component of the acetyl coenzyme A carboxylase (ACC) complex. First, biotin carboxylase catalyzes the carboxylation of biotin on its carrier protein (BCCP) and then the CO(2) group is transferred by the carboxyltransferase to acetyl-CoA to form malonyl-CoA. The sequence is that of Acetyl-coenzyme A carboxylase carboxyl transferase subunit alpha from Pyropia yezoensis (Susabi-nori).